A 143-amino-acid polypeptide reads, in one-letter code: Large ribosomal subunit protein uL11 (143 aa).

It belongs to the universal ribosomal protein uL11 family. Part of the ribosomal stalk of the 50S ribosomal subunit. Interacts with L10 and the large rRNA to form the base of the stalk. L10 forms an elongated spine to which L12 dimers bind in a sequential fashion forming a multimeric L10(L12)X complex. One or more lysine residues are methylated.

In terms of biological role, forms part of the ribosomal stalk which helps the ribosome interact with GTP-bound translation factors. The protein is Large ribosomal subunit protein uL11 of Thiobacillus denitrificans (strain ATCC 25259 / T1).